A 400-amino-acid chain; its full sequence is Probable peptidoglycan glycosyltransferase FtsW (400 aa).

Residues 1 to 29 (MVIERIKHLASPLQDWVFTPSPKVMFDRQ) are Cytoplasmic-facing. The helical transmembrane segment at 30 to 50 (LIWIALGLMLTGLVMVASASF) threads the bilayer. The Periplasmic portion of the chain corresponds to 51–60 (PISTRLTGQP). The helical transmembrane segment at 61 to 81 (FHFMMRHMLFVFLALSISSIV) threads the bilayer. The Cytoplasmic segment spans residues 82 to 95 (LRIELNKWLKYSSH). Residues 96-116 (LLLISLLLLAAVLVVGKSVNG) form a helical membrane-spanning segment. Topologically, residues 117–122 (AARWLP) are periplasmic. Residues 123 to 143 (LGIFNLQPAEVAKLSLFVFIA) form a helical membrane-spanning segment. The Cytoplasmic segment spans residues 144 to 155 (GYLVRRHGEVRD). Residues 156–176 (SFRGFVKPLLVLITLAFFLLM) traverse the membrane as a helical segment. Residues 177-178 (QP) are Periplasmic-facing. Residues 179 to 199 (DLGTTVVMFVTTIAMLFIAGA) form a helical membrane-spanning segment. Lys200 is a topological domain (cytoplasmic). The helical transmembrane segment at 201-221 (LWQFIALVMGGISLVIVLILA) threads the bilayer. Residues 222 to 290 (EPYRMRRVTS…VFAVIAEELG (69 aa)) are Periplasmic-facing. A helical transmembrane segment spans residues 291–311 (FVGVCLVLCLIFALVFKALLI). The Cytoplasmic portion of the chain corresponds to 312 to 321 (GRKCLAHDQR). A helical membrane pass occupies residues 322-342 (FGGFLAFGIGIWFAFQTLVNV). Topologically, residues 343–356 (GAAAGIVPTKGLTL) are periplasmic. A helical transmembrane segment spans residues 357–377 (PLISYGGSSLIIMSVAVSLLI). Topologically, residues 378 to 400 (RIDHECRVYLANEPPRSENEEQK) are cytoplasmic.

This sequence belongs to the SEDS family. FtsW subfamily.

The protein resides in the cell inner membrane. It catalyses the reaction [GlcNAc-(1-&gt;4)-Mur2Ac(oyl-L-Ala-gamma-D-Glu-L-Lys-D-Ala-D-Ala)](n)-di-trans,octa-cis-undecaprenyl diphosphate + beta-D-GlcNAc-(1-&gt;4)-Mur2Ac(oyl-L-Ala-gamma-D-Glu-L-Lys-D-Ala-D-Ala)-di-trans,octa-cis-undecaprenyl diphosphate = [GlcNAc-(1-&gt;4)-Mur2Ac(oyl-L-Ala-gamma-D-Glu-L-Lys-D-Ala-D-Ala)](n+1)-di-trans,octa-cis-undecaprenyl diphosphate + di-trans,octa-cis-undecaprenyl diphosphate + H(+). The protein operates within cell wall biogenesis; peptidoglycan biosynthesis. Its function is as follows. Peptidoglycan polymerase that is essential for cell division. In Aliivibrio salmonicida (strain LFI1238) (Vibrio salmonicida (strain LFI1238)), this protein is Probable peptidoglycan glycosyltransferase FtsW.